Here is a 310-residue protein sequence, read N- to C-terminus: Nucleotide-binding protein BLA_1368 (310 aa).

The disordered stretch occupies residues 1–21 (MQSARNEQRGTGPESPHAASP). Position 32 to 39 (32 to 39 (GMSGAGRS)) interacts with ATP. A GTP-binding site is contributed by 83–86 (DVRS).

Belongs to the RapZ-like family.

Its function is as follows. Displays ATPase and GTPase activities. The chain is Nucleotide-binding protein BLA_1368 from Bifidobacterium animalis subsp. lactis (strain AD011).